The sequence spans 406 residues: MAKAHKDVKKIVLAYSGGLDTSIILKWLKNEYGCEVIAFSADLGQGDELAPIRDKAIATGADKVYIDDLKEEFVKDFVFPMFRANAIYEGHYLLGTSIARPLIAKRQMEIAKIEGADAVSHGATGKGNDQVRFELAYYHFDPAITVVAPWREWKLNSRQALVNYARKNGIPIPVTKKRPWSSDRNLLHISFEGGILEDTWAEPPENMYVLTKAPEKAPNKPQFVEIEFKNGNAVAVDGEKMSPAQLLAHLNYIGGEHGIGRVDLLENRSVGMKSRGVYETPGGTILREAHSAVEQITMDREVMRIRDSLIPEYARQVYAGYWFSPEREMLQTLIDDSQKCVNGVARVKLYKGHCRTVGRKSETNSLFNLDFATFEKDQVFNQADATGFIKINSLRLRIRSLMQGKK.

ATP-binding positions include 14-22 and alanine 41; that span reads AYSGGLDTS. L-citrulline contacts are provided by tyrosine 92 and serine 97. Glycine 122 lines the ATP pocket. The L-aspartate site is built by threonine 124, asparagine 128, and aspartate 129. Residue asparagine 128 coordinates L-citrulline. 5 residues coordinate L-citrulline: arginine 132, serine 181, serine 190, glutamate 266, and tyrosine 278.

This sequence belongs to the argininosuccinate synthase family. Type 1 subfamily. In terms of assembly, homotetramer.

It is found in the cytoplasm. The catalysed reaction is L-citrulline + L-aspartate + ATP = 2-(N(omega)-L-arginino)succinate + AMP + diphosphate + H(+). It functions in the pathway amino-acid biosynthesis; L-arginine biosynthesis; L-arginine from L-ornithine and carbamoyl phosphate: step 2/3. The sequence is that of Argininosuccinate synthase from Geobacter sulfurreducens (strain ATCC 51573 / DSM 12127 / PCA).